Reading from the N-terminus, the 197-residue chain is Peptidoglycan-recognition protein 1 (197 aa).

Residues 1-23 (MKLATITFFLLTEIFFYISYAEA) form the signal peptide. 2 disulfides stabilise this stretch: cysteine 31–cysteine 154 and cysteine 68–cysteine 74. Residues 53-180 (KPLERVVIHH…RNVKATKSPG (128 aa)) form the N-acetylmuramoyl-L-alanine amidase domain.

The protein belongs to the N-acetylmuramoyl-L-alanine amidase 2 family. In terms of tissue distribution, localizes to plasma (at protein level).

The protein resides in the secreted. In terms of biological role, peptidoglycan-recognition protein probably involved in innate immunity by binding to peptidoglycans (PGN) of bacteria and activating the prophenoloxidase (proPO) cascade immune response. Binds to 1,3-beta-D-glucan and PGN. The protein is Peptidoglycan-recognition protein 1 (PGRP-1) of Holotrichia diomphalia (Korean black chafer).